The chain runs to 101 residues: Anti-lipopolysaccharide factor (101 aa).

C31 and C52 are joined by a disulfide.

In terms of biological role, binds tightly to LPS and thus specifically inhibits the LPS-mediated activation of the hemolymph coagulation. It has a strong antibacterial effect especially on the growth of Gram-negative bacteria. The sequence is that of Anti-lipopolysaccharide factor from Limulus polyphemus (Atlantic horseshoe crab).